Consider the following 191-residue polypeptide: dTTP/UTP pyrophosphatase (191 aa).

The active-site Proton acceptor is the D69.

This sequence belongs to the Maf family. YhdE subfamily. The cofactor is a divalent metal cation.

It localises to the cytoplasm. The enzyme catalyses dTTP + H2O = dTMP + diphosphate + H(+). It carries out the reaction UTP + H2O = UMP + diphosphate + H(+). In terms of biological role, nucleoside triphosphate pyrophosphatase that hydrolyzes dTTP and UTP. May have a dual role in cell division arrest and in preventing the incorporation of modified nucleotides into cellular nucleic acids. The protein is dTTP/UTP pyrophosphatase of Pelotomaculum thermopropionicum (strain DSM 13744 / JCM 10971 / SI).